The sequence spans 480 residues: G-protein coupled receptor seb-2 (480 aa).

The Extracellular segment spans residues 1 to 222 (MNPSISTAGA…CMSNGDVEAR (222 aa)). An N-linked (GlcNAc...) asparagine glycan is attached at Asn95. The helical transmembrane segment at 223–243 (ILAGLLTYSASVIFLIPAVFL) threads the bilayer. Residues 244-261 (LTLLRPIRCQPMFILHRH) are Cytoplasmic-facing. A helical membrane pass occupies residues 262–282 (LLISCLLYGAFYLITVSLFVV). At 283-305 (NDAPLSSQVFQNHLFCRLLFSIQ) the chain is on the extracellular side. Residues 306-328 (LRYLRLTNFTWMLAEAVYLWRLL) form a helical membrane-spanning segment. At 329–343 (HTAQHSEGETLRSYK) the chain is on the cytoplasmic side. The helical transmembrane segment at 344 to 364 (VICWGVPGVITVVYIFVRSLN) threads the bilayer. Residues 365-386 (DDVGMCWIENSTVAWIEWMIIT) are Extracellular-facing. A helical membrane pass occupies residues 387 to 407 (PSLLAMGVNLLLLGLIVYILV). Residues 408–423 (KKLRCDPHLERIQYRK) are Cytoplasmic-facing. Residues 424-444 (AVRGALMLIPVFGVQQLLTIY) traverse the membrane as a helical segment. Over 445–480 (RFRNVCLIYRLLHKSFCRRMCSEILVITSGEAGSRS) the chain is Extracellular.

Belongs to the G-protein coupled receptor 2 family. As to expression, present in the head body-wall muscles from the L1 larval stage through to adulthood. Also expressed between L4 and the adult molt in vulval vm1 muscle cells. These cells play a role in opening the vulva during egg laying.

It localises to the cell membrane. Functionally, not known. Putative receptor. The protein is G-protein coupled receptor seb-2 of Caenorhabditis elegans.